The following is a 150-amino-acid chain: Oleosin Ara h 10.0102 (150 aa).

2 consecutive transmembrane segments (helical) span residues 39 to 59 (VIAV…AGLA) and 73 to 93 (LFIL…LSVA).

This sequence belongs to the oleosin family. As to expression, expressed in seeds (at protein level).

Its subcellular location is the lipid droplet. The protein resides in the membrane. May have a structural role to stabilize the lipid body during desiccation of the seed by preventing coalescence of the oil. Probably interacts with both lipid and phospholipid moieties of lipid bodies. May also provide recognition signals for specific lipase anchorage in lipolysis during seedling growth. In Arachis hypogaea (Peanut), this protein is Oleosin Ara h 10.0102.